The following is a 443-amino-acid chain: L-seryl-tRNA(Sec) selenium transferase (443 aa).

Position 285 is an N6-(pyridoxal phosphate)lysine (Lys-285).

This sequence belongs to the SelA family. Requires pyridoxal 5'-phosphate as cofactor.

It is found in the cytoplasm. The enzyme catalyses L-seryl-tRNA(Sec) + selenophosphate + H(+) = L-selenocysteinyl-tRNA(Sec) + phosphate. It participates in aminoacyl-tRNA biosynthesis; selenocysteinyl-tRNA(Sec) biosynthesis; selenocysteinyl-tRNA(Sec) from L-seryl-tRNA(Sec) (bacterial route): step 1/1. Converts seryl-tRNA(Sec) to selenocysteinyl-tRNA(Sec) required for selenoprotein biosynthesis. The sequence is that of L-seryl-tRNA(Sec) selenium transferase from Campylobacter lari (strain RM2100 / D67 / ATCC BAA-1060).